A 256-amino-acid polypeptide reads, in one-letter code: Thiazole synthase (256 aa).

The Schiff-base intermediate with DXP role is filled by Lys-96. Residues Gly-157, 184 to 185, and 206 to 207 each bind 1-deoxy-D-xylulose 5-phosphate; these read AG and NT.

It belongs to the ThiG family. In terms of assembly, homotetramer. Forms heterodimers with either ThiH or ThiS.

The protein resides in the cytoplasm. It catalyses the reaction [ThiS sulfur-carrier protein]-C-terminal-Gly-aminoethanethioate + 2-iminoacetate + 1-deoxy-D-xylulose 5-phosphate = [ThiS sulfur-carrier protein]-C-terminal Gly-Gly + 2-[(2R,5Z)-2-carboxy-4-methylthiazol-5(2H)-ylidene]ethyl phosphate + 2 H2O + H(+). Its pathway is cofactor biosynthesis; thiamine diphosphate biosynthesis. Its function is as follows. Catalyzes the rearrangement of 1-deoxy-D-xylulose 5-phosphate (DXP) to produce the thiazole phosphate moiety of thiamine. Sulfur is provided by the thiocarboxylate moiety of the carrier protein ThiS. In vitro, sulfur can be provided by H(2)S. In Brucella suis (strain ATCC 23445 / NCTC 10510), this protein is Thiazole synthase.